The sequence spans 372 residues: Cyclin-dependent kinase 9 (372 aa).

The 297-residue stretch at 19-315 folds into the Protein kinase domain; sequence YEKLAKIGQG…SDDALNHDFF (297 aa). ATP is bound by residues 25–33 and Lys-48; that span reads IGQGTFGEV. Asp-149 acts as the Proton acceptor in catalysis. The segment at 341-372 is disordered; that stretch reads PPRRRGGHMPQQPANQGRNPAATNQTEFDRVF. Positions 352–366 are enriched in polar residues; the sequence is QPANQGRNPAATNQT.

It belongs to the protein kinase superfamily. CMGC Ser/Thr protein kinase family. CDC2/CDKX subfamily. In terms of assembly, associates with cyclin-T to form P-TEFb. Also associates with cyclin-K.

It localises to the nucleus. It carries out the reaction L-seryl-[protein] + ATP = O-phospho-L-seryl-[protein] + ADP + H(+). It catalyses the reaction L-threonyl-[protein] + ATP = O-phospho-L-threonyl-[protein] + ADP + H(+). The catalysed reaction is [DNA-directed RNA polymerase] + ATP = phospho-[DNA-directed RNA polymerase] + ADP + H(+). In terms of biological role, member of the cyclin-dependent kinase pair (CDK9/cyclin-T) complex, also called positive transcription elongation factor b (P-TEFb), which facilitates the transition from abortive to production elongation by phosphorylating the CTD (C-terminal domain) of the large subunit of RNA polymerase II (RNAP II), SUPT5H and RDBP. The CDK9/cyclin-K complex also has a kinase activity toward CTD of RNAP II and can substitute for P-TEFb in vitro. This is Cyclin-dependent kinase 9 (CDK9) from Gallus gallus (Chicken).